We begin with the raw amino-acid sequence, 745 residues long: Elongation factor G, mitochondrial (745 aa).

The N-terminal 15 residues, Met1–Arg15, are a transit peptide targeting the mitochondrion. The tr-type G domain occupies Asp40–Gly317. GTP is bound by residues Ala49–Thr56, Asp116–His120, and Asn170–Asp173.

This sequence belongs to the TRAFAC class translation factor GTPase superfamily. Classic translation factor GTPase family. EF-G/EF-2 subfamily.

The protein localises to the mitochondrion. It participates in protein biosynthesis; polypeptide chain elongation. In terms of biological role, mitochondrial GTPase that catalyzes the GTP-dependent ribosomal translocation step during translation elongation. During this step, the ribosome changes from the pre-translocational (PRE) to the post-translocational (POST) state as the newly formed A-site-bound peptidyl-tRNA and P-site-bound deacylated tRNA move to the P and E sites, respectively. Catalyzes the coordinated movement of the two tRNA molecules, the mRNA and conformational changes in the ribosome. Essential during development as it acts as a retrograde signal from mitochondria to the nucleus to slow down cell proliferation if mitochondrial energy output is low. The chain is Elongation factor G, mitochondrial (ico) from Drosophila ananassae (Fruit fly).